A 227-amino-acid chain; its full sequence is Protein FAM3C (227 aa).

The first 24 residues, 1–24 (MRVAGAAKLVVAVAVFLLTFYVIS), serve as a signal peptide directing secretion. Cystine bridges form between cysteine 58-cysteine 86 and cysteine 64-cysteine 221. The region spanning 67 to 225 (KHFAFKMASG…VEMEGCIPQK (159 aa)) is the GG-type lectin domain.

This sequence belongs to the FAM3 family. As to expression, present in most secretory epithelia (at protein level).

The protein localises to the secreted. It is found in the cytoplasmic vesicle. Functionally, may be involved in retinal laminar formation. Promotes epithelial to mesenchymal transition. The chain is Protein FAM3C (FAM3C) from Homo sapiens (Human).